We begin with the raw amino-acid sequence, 216 residues long: Molybdenum cofactor guanylyltransferase (216 aa).

Residues 16–18, Lys-28, Asn-57, Asp-73, and Asp-108 contribute to the GTP site; that span reads LAG. Residue Asp-108 coordinates Mg(2+).

It belongs to the MobA family. In terms of assembly, monomer. It depends on Mg(2+) as a cofactor.

The protein localises to the cytoplasm. The enzyme catalyses Mo-molybdopterin + GTP + H(+) = Mo-molybdopterin guanine dinucleotide + diphosphate. Its function is as follows. Transfers a GMP moiety from GTP to Mo-molybdopterin (Mo-MPT) cofactor (Moco or molybdenum cofactor) to form Mo-molybdopterin guanine dinucleotide (Mo-MGD) cofactor. This chain is Molybdenum cofactor guanylyltransferase, found in Rhizobium rhizogenes (strain K84 / ATCC BAA-868) (Agrobacterium radiobacter).